The sequence spans 404 residues: Corticosteroid-binding globulin (404 aa).

Positions 1–30 (MAWSTRTMMSLALYTCFLWLLTSGLKTVQS) are cleaved as a signal peptide. Residues asparagine 95 and asparagine 225 are each glycosylated (N-linked (GlcNAc...) asparagine). Glutamine 253 is a binding site for cortisol. N-linked (GlcNAc...) asparagine glycosylation is present at asparagine 259. Glutamate 285 is a cortisol binding site. An N-linked (GlcNAc...) asparagine glycan is attached at asparagine 326. Tryptophan 392 serves as a coordination point for cortisol.

The protein belongs to the serpin family. Expressed by the liver; secreted in plasma.

The protein localises to the secreted. Major transport protein for glucocorticoids and progestins in the blood of almost all vertebrate species. The sequence is that of Corticosteroid-binding globulin (SERPINA6) from Mesocricetus auratus (Golden hamster).